Here is a 586-residue protein sequence, read N- to C-terminus: Scavenger receptor cysteine-rich domain-containing group B protein (586 aa).

A disordered region spans residues 1-33; it reads MGPSERPSIGWTPKEAEMQIGPQPDGWSRGWKP. Positions 1–58 are cleaved as a signal peptide; it reads MGPSERPSIGWTPKEAEMQIGPQPDGWSRGWKPGDRGAVPLPLSPALSFLLLFPLASA. SRCR domains lie at 69 to 169, 200 to 300, 355 to 455, and 484 to 584; these read LRLV…VLCD, VRLV…VLCA, LRLV…ALCA, and LRLA…VLCQ. 12 cysteine pairs are disulfide-bonded: Cys94-Cys158, Cys107-Cys168, Cys138-Cys148, Cys225-Cys289, Cys238-Cys299, Cys269-Cys279, Cys380-Cys444, Cys393-Cys454, Cys424-Cys434, Cys509-Cys573, Cys522-Cys583, and Cys553-Cys563.

Its subcellular location is the secreted. In Mus musculus (Mouse), this protein is Scavenger receptor cysteine-rich domain-containing group B protein.